The following is a 182-amino-acid chain: Ribosome-recycling factor (182 aa).

The disordered stretch occupies residues 136–160 (VKKSEKDGDLSEDQSRDEQEKIQKE).

Belongs to the RRF family.

It is found in the cytoplasm. Responsible for the release of ribosomes from messenger RNA at the termination of protein biosynthesis. May increase the efficiency of translation by recycling ribosomes from one round of translation to another. In Prochlorococcus marinus (strain NATL1A), this protein is Ribosome-recycling factor.